Reading from the N-terminus, the 241-residue chain is Geranylgeranylglyceryl phosphate synthase (241 aa).

Residues Asp19 and Ser46 each contribute to the Mg(2+) site. Sn-glycerol 1-phosphate is bound by residues 167–173 (YLEAGSG), 198–199 (GG), and 220–221 (GT).

The protein belongs to the GGGP/HepGP synthase family. Group II subfamily. Requires Mg(2+) as cofactor.

It localises to the cytoplasm. The enzyme catalyses sn-glycerol 1-phosphate + (2E,6E,10E)-geranylgeranyl diphosphate = sn-3-O-(geranylgeranyl)glycerol 1-phosphate + diphosphate. The protein operates within membrane lipid metabolism; glycerophospholipid metabolism. Functionally, prenyltransferase that catalyzes the transfer of the geranylgeranyl moiety of geranylgeranyl diphosphate (GGPP) to the C3 hydroxyl of sn-glycerol-1-phosphate (G1P). This reaction is the first ether-bond-formation step in the biosynthesis of archaeal membrane lipids. This is Geranylgeranylglyceryl phosphate synthase from Pyrobaculum calidifontis (strain DSM 21063 / JCM 11548 / VA1).